The chain runs to 232 residues: MHLLIPAAGSGRRFGADRNKLLLPLLGQPVLAWTLQAADQAQSITWIGIIGQPGDRADIEALVDQLQLATPVSWIQGGRERQESVFNGLRSLPSGAQQVLIHDGARCLATPTLFDRCSAALQTCPAFVAAVPVKDTIKQVAADGTIAATPDRSTLWAAQTPQGFTVESLLRCHRQGLEQQLAVTDDAALLEAFGLPVQIVEGEETNLKVTTPADLAIAELILKQRQFTAAIA.

This sequence belongs to the IspD/TarI cytidylyltransferase family. IspD subfamily.

It catalyses the reaction 2-C-methyl-D-erythritol 4-phosphate + CTP + H(+) = 4-CDP-2-C-methyl-D-erythritol + diphosphate. It participates in isoprenoid biosynthesis; isopentenyl diphosphate biosynthesis via DXP pathway; isopentenyl diphosphate from 1-deoxy-D-xylulose 5-phosphate: step 2/6. Catalyzes the formation of 4-diphosphocytidyl-2-C-methyl-D-erythritol from CTP and 2-C-methyl-D-erythritol 4-phosphate (MEP). This chain is 2-C-methyl-D-erythritol 4-phosphate cytidylyltransferase, found in Synechococcus elongatus (strain ATCC 33912 / PCC 7942 / FACHB-805) (Anacystis nidulans R2).